The following is a 754-amino-acid chain: Ribonucleoside-diphosphate reductase subunit alpha (754 aa).

The ATP-cone domain maps to 4 to 93 (INVIKSSGVS…MFALRKHVYG (90 aa)). Residues Thr206, 221 to 222 (SC), Gly250, 435 to 439 (NLCCE), and 615 to 619 (PCESS) contribute to the substrate site. Residues Cys222 and Cys457 are joined by a disulfide bond. The active-site Proton acceptor is Asn435. The active-site Cysteine radical intermediate is the Cys437. Glu439 (proton acceptor) is an active-site residue. The interval 621-641 (QVSNSTNGYEPPRGPVSVKES) is disordered.

This sequence belongs to the ribonucleoside diphosphate reductase large chain family. Heterodimer of a large and a small subunit.

It carries out the reaction a 2'-deoxyribonucleoside 5'-diphosphate + [thioredoxin]-disulfide + H2O = a ribonucleoside 5'-diphosphate + [thioredoxin]-dithiol. Its activity is regulated as follows. Under complex allosteric control mediated by deoxynucleoside triphosphates and ATP binding. The type of nucleotide bound at the specificity site determines substrate preference. It seems probable that ATP makes the enzyme reduce CDP and UDP, dGTP favors ADP reduction and dTTP favors GDP reduction. In terms of biological role, provides the precursors necessary for DNA synthesis. Catalyzes the biosynthesis of deoxyribonucleotides from the corresponding ribonucleotides. The chain is Ribonucleoside-diphosphate reductase subunit alpha (NRDA) from Escherichia coli (Bacteriophage T4).